The sequence spans 493 residues: Exosome complex component Rrp41 (493 aa).

Disordered regions lie at residues valine 244–valine 264 and leucine 291–glutamate 493. Residues alanine 249–leucine 259 are compositionally biased toward basic and acidic residues. A compositionally biased stretch (acidic residues) spans proline 297 to alanine 377. Over residues proline 383–alanine 400 the composition is skewed to basic and acidic residues. The span at serine 401–lysine 471 shows a compositional bias: acidic residues. The span at serine 472–glutamate 493 shows a compositional bias: basic and acidic residues.

The protein belongs to the RNase PH family. Rrp41 subfamily. In terms of assembly, component of the archaeal exosome complex. Forms a hexameric ring-like arrangement composed of 3 Rrp41-Rrp42 heterodimers. The hexameric ring associates with a trimer of Rrp4 and/or Csl4 subunits.

Its subcellular location is the cytoplasm. Catalytic component of the exosome, which is a complex involved in RNA degradation. Has 3'-&gt;5' exoribonuclease activity. Can also synthesize heteromeric RNA-tails. The protein is Exosome complex component Rrp41 of Methanosarcina mazei (strain ATCC BAA-159 / DSM 3647 / Goe1 / Go1 / JCM 11833 / OCM 88) (Methanosarcina frisia).